The primary structure comprises 208 residues: Histone H1t (208 aa).

The segment covering 1–12 (MSETAPAASSTL) has biased composition (polar residues). The interval 1–39 (MSETAPAASSTLVPAPVEKPATKRRGKKPGMATARKPRG) is disordered. S9 is modified (phosphoserine). The H15 domain occupies 38-111 (RGFSVSKLIP…GASGSFKLSK (74 aa)). R56 carries the citrulline modification. The disordered stretch occupies residues 93-208 (GVLVQTKGTG…TDLRKAAGRK (116 aa)). Over residues 121–134 (KGKKSASAKAKKLG) the composition is skewed to basic residues. S141 is modified (phosphoserine). Positions 143-154 (KSSKTKVVKKPK) are enriched in basic residues. T156 is modified (phosphothreonine). Phosphoserine is present on residues S163, S178, and S187. Basic and acidic residues predominate over residues 199–208 (TDLRKAAGRK).

Belongs to the histone H1/H5 family. Post-translationally, phosphorylated in early spermatids. In terms of processing, citrullination at Arg-56 (H1R54ci) by PADI4 takes place within the DNA-binding site of H1 and results in its displacement from chromatin and global chromatin decondensation, thereby promoting pluripotency and stem cell maintenance. Testis-specific. Expressed in pachytene spermatocytes during meiotic prophase I.

The protein localises to the nucleus. It is found in the chromosome. Testis-specific histone H1 that forms less compacted chromatin compared to other H1 histone subtypes. Formation of more relaxed chromatin may be required to promote chromatin architecture required for proper chromosome regulation during meiosis, such as homologous recombination. Histones H1 act as linkers that bind to nucleosomes and compact polynucleosomes into a higher-order chromatin configuration. This chain is Histone H1t, found in Rattus norvegicus (Rat).